A 961-amino-acid polypeptide reads, in one-letter code: Aconitate hydratase A (961 aa).

Cysteine 499, cysteine 565, and cysteine 568 together coordinate [4Fe-4S] cluster.

Belongs to the aconitase/IPM isomerase family. Monomer. Requires [4Fe-4S] cluster as cofactor.

The catalysed reaction is citrate = D-threo-isocitrate. The enzyme catalyses (2S,3R)-3-hydroxybutane-1,2,3-tricarboxylate = 2-methyl-cis-aconitate + H2O. It functions in the pathway carbohydrate metabolism; tricarboxylic acid cycle; isocitrate from oxaloacetate: step 2/2. Its pathway is organic acid metabolism; propanoate degradation. Involved in the catabolism of short chain fatty acids (SCFA) via the tricarboxylic acid (TCA)(acetyl degradation route) and probably via the 2-methylcitrate cycle I (propionate degradation route). Catalyzes the reversible isomerization of citrate to isocitrate via cis-aconitate. The apo form of AcnA functions as a RNA-binding regulatory protein. Could catalyze the hydration of 2-methyl-cis-aconitate to yield (2R,3S)-2-methylisocitrate. This chain is Aconitate hydratase A (acn), found in Mycobacterium avium.